We begin with the raw amino-acid sequence, 126 residues long: Aspartate 1-decarboxylase (126 aa).

The active-site Schiff-base intermediate with substrate; via pyruvic acid is S25. S25 is modified (pyruvic acid (Ser)). T57 lines the substrate pocket. The Proton donor role is filled by Y58. 73-75 (GAA) lines the substrate pocket.

It belongs to the PanD family. As to quaternary structure, heterooctamer of four alpha and four beta subunits. It depends on pyruvate as a cofactor. Is synthesized initially as an inactive proenzyme, which is activated by self-cleavage at a specific serine bond to produce a beta-subunit with a hydroxyl group at its C-terminus and an alpha-subunit with a pyruvoyl group at its N-terminus.

The protein localises to the cytoplasm. It carries out the reaction L-aspartate + H(+) = beta-alanine + CO2. Its pathway is cofactor biosynthesis; (R)-pantothenate biosynthesis; beta-alanine from L-aspartate: step 1/1. Its function is as follows. Catalyzes the pyruvoyl-dependent decarboxylation of aspartate to produce beta-alanine. This chain is Aspartate 1-decarboxylase, found in Pectobacterium carotovorum subsp. carotovorum (strain PC1).